Consider the following 172-residue polypeptide: Co-chaperone protein HscB homolog (172 aa).

The J domain occupies 2–69 (NHFELFNLPV…DSRAAYLLAL (68 aa)).

The protein belongs to the HscB family. Interacts with HscA and stimulates its ATPase activity.

Its function is as follows. Co-chaperone involved in the maturation of iron-sulfur cluster-containing proteins. Seems to help targeting proteins to be folded toward HscA. The polypeptide is Co-chaperone protein HscB homolog (Acinetobacter baumannii (strain AB307-0294)).